The primary structure comprises 120 residues: Ribonuclease P protein component 2 (120 aa).

It belongs to the eukaryotic/archaeal RNase P protein component 2 family. As to quaternary structure, consists of a catalytic RNA component and at least 4-5 protein subunits. Forms a subcomplex with Rnp3 which stimulates the catalytic RNA.

The protein resides in the cytoplasm. It carries out the reaction Endonucleolytic cleavage of RNA, removing 5'-extranucleotides from tRNA precursor.. Part of ribonuclease P, a protein complex that generates mature tRNA molecules by cleaving their 5'-ends. The RNA is catalytic, but its KM for pre-tRNA is 170-fold decreased in the presence of the 4 known protein subunits (Rnp1-4). The protein subunits also decrease the amount of Mg(2+) needed for activity. The protein is Ribonuclease P protein component 2 of Pyrococcus furiosus (strain ATCC 43587 / DSM 3638 / JCM 8422 / Vc1).